The following is a 416-amino-acid chain: Homeobox even-skipped homolog protein 1 (416 aa).

Disordered stretches follow at residues 30–120 (AVSS…SDFY) and 138–178 (YQHS…LACS). Residues 72–82 (GLAGSAAGLGA) are compositionally biased toward low complexity. A compositionally biased stretch (polar residues) spans 102–114 (DSLSGQGQPSSSD). A DNA-binding region (homeobox) is located at residues 183–242 (MRRYRTAFTREQIARLEKEFYRENYVSRPRRCELAAALNLPETTIKVWFQNRRMKDKRQR).

This sequence belongs to the even-skipped homeobox family.

The protein resides in the nucleus. May play a role in the specification of neuronal cell types. May play a role in the dorsoventral specification of mesodermal cell fate. This chain is Homeobox even-skipped homolog protein 1 (Evx1), found in Mus musculus (Mouse).